The sequence spans 536 residues: Probable pectinesterase/pectinesterase inhibitor 59 (536 aa).

Residues 1–30 form the signal peptide; the sequence is MNMMMQKLSILFLHLILLVLLCVHPLTTVA. Positions 31-183 are pectinesterase inhibitor 59; the sequence is DRNSTDWCDK…SHLISNCLAV (153 aa). 5 N-linked (GlcNAc...) asparagine glycosylation sites follow: Asn-33, Asn-91, Asn-116, Asn-159, and Asn-195. The tract at residues 221–522 is pectinesterase 59; that stretch reads NLVVAKDGSG…FTVGKFIAGT (302 aa). Substrate-binding residues include Thr-298 and Gln-328. The active-site Proton donor; for pectinesterase activity is the Asp-351. Cys-365 and Cys-385 are joined by a disulfide. Asp-372 functions as the Nucleophile; for pectinesterase activity in the catalytic mechanism. 2 residues coordinate substrate: Arg-440 and Trp-442.

In the N-terminal section; belongs to the PMEI family. This sequence in the C-terminal section; belongs to the pectinesterase family. In terms of tissue distribution, expressed in siliques.

Its subcellular location is the secreted. The protein resides in the cell wall. It carries out the reaction [(1-&gt;4)-alpha-D-galacturonosyl methyl ester](n) + n H2O = [(1-&gt;4)-alpha-D-galacturonosyl](n) + n methanol + n H(+). It functions in the pathway glycan metabolism; pectin degradation; 2-dehydro-3-deoxy-D-gluconate from pectin: step 1/5. Functionally, acts in the modification of cell walls via demethylesterification of cell wall pectin. This chain is Probable pectinesterase/pectinesterase inhibitor 59 (PME59), found in Arabidopsis thaliana (Mouse-ear cress).